Consider the following 128-residue polypeptide: Large ribosomal subunit protein bL17 (128 aa).

It belongs to the bacterial ribosomal protein bL17 family. Part of the 50S ribosomal subunit. Contacts protein L32.

The chain is Large ribosomal subunit protein bL17 from Streptococcus equi subsp. equi (strain 4047).